Reading from the N-terminus, the 66-residue chain is Protein I177L (66 aa).

Asn-11 carries an N-linked (GlcNAc...) asparagine; by host glycan.

Belongs to the asfivirus I177L family.

Its subcellular location is the virion. The polypeptide is Protein I177L (Ornithodoros (relapsing fever ticks)).